The sequence spans 120 residues: UPF0102 protein Moth_0988 (120 aa).

Belongs to the UPF0102 family.

The protein is UPF0102 protein Moth_0988 of Moorella thermoacetica (strain ATCC 39073 / JCM 9320).